The following is a 355-amino-acid chain: S-adenosylmethionine:tRNA ribosyltransferase-isomerase (355 aa).

Belongs to the QueA family. In terms of assembly, monomer.

It is found in the cytoplasm. The catalysed reaction is 7-aminomethyl-7-carbaguanosine(34) in tRNA + S-adenosyl-L-methionine = epoxyqueuosine(34) in tRNA + adenine + L-methionine + 2 H(+). It functions in the pathway tRNA modification; tRNA-queuosine biosynthesis. Transfers and isomerizes the ribose moiety from AdoMet to the 7-aminomethyl group of 7-deazaguanine (preQ1-tRNA) to give epoxyqueuosine (oQ-tRNA). In Pectobacterium carotovorum subsp. carotovorum (strain PC1), this protein is S-adenosylmethionine:tRNA ribosyltransferase-isomerase.